A 389-amino-acid chain; its full sequence is Cellobiose 2-epimerase (389 aa).

The protein belongs to the cellobiose 2-epimerase family.

It localises to the cytoplasm. The catalysed reaction is D-cellobiose = beta-D-glucosyl-(1-&gt;4)-D-mannopyranose. Its activity is regulated as follows. Enhanced by Mg(2+) and Ca(2+) ions, ethylenediaminetetraacetic acid, ethylene glycol tetraacetic acid and citrate. Inhibited by Al(3+), Fe(3+), Co(2+), Cu(2+), Zn(2+), Pb(2+) and Ag(+) ions, iodoacetate, 4-chloromercuribenzoate and N-bromosuccinimide. Its function is as follows. Catalyzes the reversible epimerization of cellobiose to 4-O-beta-D-glucopyranosyl-D-mannose (Glc-Man). Can also epimerize cellotriose to Glc-Glc-Man, cellotetraose to Glc-Glc-Glc-Man, and lactose to epilactose. This Ruminococcus albus protein is Cellobiose 2-epimerase (ce-ne1).